The chain runs to 322 residues: Ribosomal RNA small subunit methyltransferase H (322 aa).

S-adenosyl-L-methionine-binding positions include 47 to 49 (GGH), D67, F93, D112, and Q119.

It belongs to the methyltransferase superfamily. RsmH family.

The protein resides in the cytoplasm. It carries out the reaction cytidine(1402) in 16S rRNA + S-adenosyl-L-methionine = N(4)-methylcytidine(1402) in 16S rRNA + S-adenosyl-L-homocysteine + H(+). Functionally, specifically methylates the N4 position of cytidine in position 1402 (C1402) of 16S rRNA. The sequence is that of Ribosomal RNA small subunit methyltransferase H from Stenotrophomonas maltophilia (strain K279a).